A 283-amino-acid polypeptide reads, in one-letter code: Pantothenate synthetase (283 aa).

30–37 is a binding site for ATP; the sequence is MGTLHDGH. The active-site Proton donor is the histidine 37. Glutamine 61 lines the (R)-pantoate pocket. Glutamine 61 is a beta-alanine binding site. 148–151 contacts ATP; sequence GLKD. Position 154 (glutamine 154) interacts with (R)-pantoate. An ATP-binding site is contributed by 185 to 188; sequence MSSR.

It belongs to the pantothenate synthetase family. Homodimer.

The protein localises to the cytoplasm. It catalyses the reaction (R)-pantoate + beta-alanine + ATP = (R)-pantothenate + AMP + diphosphate + H(+). It participates in cofactor biosynthesis; (R)-pantothenate biosynthesis; (R)-pantothenate from (R)-pantoate and beta-alanine: step 1/1. In terms of biological role, catalyzes the condensation of pantoate with beta-alanine in an ATP-dependent reaction via a pantoyl-adenylate intermediate. In Leptospira biflexa serovar Patoc (strain Patoc 1 / Ames), this protein is Pantothenate synthetase.